We begin with the raw amino-acid sequence, 134 residues long: Retinol-binding protein 2 (134 aa).

Residues lysine 41 and glutamine 109 each contribute to the all-trans-retinol site.

It belongs to the calycin superfamily. Fatty-acid binding protein (FABP) family. As to expression, expressed in prenatal liver, intestine and lung, and in adult intestine.

It is found in the cytoplasm. Intracellular transport of retinol. The sequence is that of Retinol-binding protein 2 (Rbp2) from Mus musculus (Mouse).